We begin with the raw amino-acid sequence, 557 residues long: Membrane protein insertase YidC (557 aa).

The chain crosses the membrane as a helical span at residues 3–23 (NLRPVLYLSMLLVLFLIWQAW). The disordered stretch occupies residues 34 to 60 (APGAQEQVMDRDGVPAPPQDVPDAPVS). A run of 4 helical transmembrane segments spans residues 366 to 386 (VVGNWGWAIIILTILIKLVFY), 436 to 456 (LGGCLPILVQIPVFIALYWVL), 480 to 500 (YFILPILMGVTMIAQYKLNPA), and 514 to 534 (PFVFTVFFAFFPAGLVLYWFV).

Belongs to the OXA1/ALB3/YidC family. Type 1 subfamily. In terms of assembly, interacts with the Sec translocase complex via SecD. Specifically interacts with transmembrane segments of nascent integral membrane proteins during membrane integration.

It is found in the cell inner membrane. Required for the insertion and/or proper folding and/or complex formation of integral membrane proteins into the membrane. Involved in integration of membrane proteins that insert both dependently and independently of the Sec translocase complex, as well as at least some lipoproteins. Aids folding of multispanning membrane proteins. This Thioalkalivibrio sulfidiphilus (strain HL-EbGR7) protein is Membrane protein insertase YidC.